Consider the following 72-residue polypeptide: Translation initiation factor IF-1 (72 aa).

Residues 1-72 (MSNDDSIEFE…TKGRITYRMK (72 aa)) enclose the S1-like domain.

The protein belongs to the IF-1 family. Component of the 30S ribosomal translation pre-initiation complex which assembles on the 30S ribosome in the order IF-2 and IF-3, IF-1 and N-formylmethionyl-tRNA(fMet); mRNA recruitment can occur at any time during PIC assembly.

The protein localises to the cytoplasm. Its function is as follows. One of the essential components for the initiation of protein synthesis. Stabilizes the binding of IF-2 and IF-3 on the 30S subunit to which N-formylmethionyl-tRNA(fMet) subsequently binds. Helps modulate mRNA selection, yielding the 30S pre-initiation complex (PIC). Upon addition of the 50S ribosomal subunit IF-1, IF-2 and IF-3 are released leaving the mature 70S translation initiation complex. The sequence is that of Translation initiation factor IF-1 from Xanthomonas campestris pv. campestris (strain B100).